We begin with the raw amino-acid sequence, 408 residues long: S100P-binding protein (408 aa).

3 disordered regions span residues 1-111 (MMCS…AETP), 162-234 (KDET…SENP), and 271-291 (VSTSSNKQDVLNKDSGKMKGH). The span at 28–59 (SLDEDGLDDSLLELSEGEEDDGDVNYTEEEID) shows a compositional bias: acidic residues. Basic and acidic residues-rich tracts occupy residues 77–86 (DGGHVEKGER) and 162–185 (KDETDSSKDTEKLSSLGEEMREDG). Residue Ser187 is modified to Phosphoserine. The segment covering 188-234 (PNESKLCTESEGISPNNSAWNGPQLSSSNNNFQQTVSDKNMPDSENP) has biased composition (polar residues). The segment covering 280–291 (VLNKDSGKMKGH) has biased composition (basic and acidic residues).

As to quaternary structure, interacts with S100P. In terms of tissue distribution, expressed in brain, spleen, and lung. Not detected in pancreas or liver. In pancreas, expressed predominantly in islet cells and to a lesser extent in acinar cells, but not expressed in ductal cells. Up-regulated in various pancreatic ductal adenocarcinomas and pancreatic intraepithelial neoplasias. Detected in pancreatic ductal adenocarcinoma cells (at protein level). Not detected in non-neoplastic ductal epithelium (at protein level).

Its subcellular location is the nucleus. This is S100P-binding protein from Homo sapiens (Human).